A 158-amino-acid polypeptide reads, in one-letter code: NADH-quinone oxidoreductase subunit B (158 aa).

Positions 37, 38, 102, and 132 each coordinate [4Fe-4S] cluster.

The protein belongs to the complex I 20 kDa subunit family. In terms of assembly, NDH-1 is composed of 14 different subunits. Subunits NuoB, C, D, E, F, and G constitute the peripheral sector of the complex. [4Fe-4S] cluster serves as cofactor.

Its subcellular location is the cell inner membrane. It carries out the reaction a quinone + NADH + 5 H(+)(in) = a quinol + NAD(+) + 4 H(+)(out). NDH-1 shuttles electrons from NADH, via FMN and iron-sulfur (Fe-S) centers, to quinones in the respiratory chain. The immediate electron acceptor for the enzyme in this species is believed to be ubiquinone. Couples the redox reaction to proton translocation (for every two electrons transferred, four hydrogen ions are translocated across the cytoplasmic membrane), and thus conserves the redox energy in a proton gradient. In Thiobacillus denitrificans (strain ATCC 25259 / T1), this protein is NADH-quinone oxidoreductase subunit B.